Reading from the N-terminus, the 184-residue chain is Endoribonuclease YbeY (184 aa).

3 residues coordinate Zn(2+): His-146, His-150, and His-156.

The protein belongs to the endoribonuclease YbeY family. Requires Zn(2+) as cofactor.

Its subcellular location is the cytoplasm. Its function is as follows. Single strand-specific metallo-endoribonuclease involved in late-stage 70S ribosome quality control and in maturation of the 3' terminus of the 16S rRNA. This is Endoribonuclease YbeY from Nostoc sp. (strain PCC 7120 / SAG 25.82 / UTEX 2576).